Consider the following 236-residue polypeptide: MASLDRVKVLVLGDSGVGKSSLVHLLCQNQVLGNPSWTVGCSVDVRVHDYKEGTPEEKTYYIELWDVGGSVGSASSVKSTRAVFYNSVNGIIFVHDLTNKKSSQNLRRWSLEALNRDLVPTGVLVTNGDYDQEQFADNQIPLLVIGTKLDQIHETKRHEVLTRTAFLAEDFNPEEINLDCTNPRYLAAGSSNAVKLSRFFDKVIEKRYFLREGNQIPGFPDRKRFGAGTLKSLHYD.

Residues 1–236 (MASLDRVKVL…AGTLKSLHYD (236 aa)) are small GTPase-like. GTP is bound by residues 16–21 (GVGKSS), 148–150 (KLD), and 179–180 (DC).

It belongs to the small GTPase superfamily. Rab family. Homodimer. Interacts with GPR89; the interaction stabilizes GPR89. Interacts with RAP1GDS1.

In terms of biological role, required for KRAS signaling regulation and modulation of cell proliferation. Regulator of KRAS prenylation, and probably prenylation of other small GTPases. Required for lymphocyte development and function. Not required for myeloid cell development. The chain is Rab-like protein 3 (RABL3) from Homo sapiens (Human).